Consider the following 370-residue polypeptide: Glucan endo-1,3-beta-glucosidase, basic vacuolar isoform GLB (370 aa).

The signal sequence occupies residues 1-32; that stretch reads MSTSDKHNTPQMAAITLLGLLLVASTIEIAGA. Pyrrolidone carboxylic acid is present on Gln33. Residue Glu128 is the Proton donor of the active site. Catalysis depends on Glu273, which acts as the Nucleophile. The propeptide at 349–370 is removed in mature form; sequence VSGGVWDSSVETNATASLISEM. The N-linked (GlcNAc...) asparagine glycan is linked to Asn361.

It belongs to the glycosyl hydrolase 17 family. As to expression, is expressed primarily in epidermal cell of healthy plant, and following induction by ethylene, accumulates in mesophyll cells.

It is found in the vacuole. The catalysed reaction is Hydrolysis of (1-&gt;3)-beta-D-glucosidic linkages in (1-&gt;3)-beta-D-glucans.. In terms of biological role, implicated in the defense of plants against pathogens. This is Glucan endo-1,3-beta-glucosidase, basic vacuolar isoform GLB from Nicotiana tabacum (Common tobacco).